A 473-amino-acid polypeptide reads, in one-letter code: Major myo-inositol transporter IolT (473 aa).

A run of 12 helical transmembrane segments spans residues 14 to 34, 49 to 69, 83 to 103, 111 to 131, 146 to 166, 172 to 192, 256 to 276, 295 to 315, 325 to 345, 350 to 370, 389 to 409, and 411 to 431; these read IILV…VLNG, AFTE…GAVF, ILFL…APNV, FVLG…LAEM, LMIV…GTTM, VWRF…FGMI, IVFI…NSIM, IGNI…IWLL, MTGL…SLVL, ALPY…QGAI, LGMG…SFTF, and ILLA…LGIC.

Belongs to the major facilitator superfamily. Sugar transporter (TC 2.A.1.1) family.

It localises to the cell membrane. The protein operates within polyol metabolism; myo-inositol degradation into acetyl-CoA. Major myo-inositol uptake transporter. The polypeptide is Major myo-inositol transporter IolT (iolT) (Bacillus subtilis (strain 168)).